The following is a 320-amino-acid chain: tRNA dimethylallyltransferase (320 aa).

Residue Gly14–Thr21 coordinates ATP. Thr16–Thr21 contacts substrate. Interaction with substrate tRNA regions lie at residues Asp39–Leu42 and Gln163–Arg167.

This sequence belongs to the IPP transferase family. As to quaternary structure, monomer. Mg(2+) is required as a cofactor.

It carries out the reaction adenosine(37) in tRNA + dimethylallyl diphosphate = N(6)-dimethylallyladenosine(37) in tRNA + diphosphate. Catalyzes the transfer of a dimethylallyl group onto the adenine at position 37 in tRNAs that read codons beginning with uridine, leading to the formation of N6-(dimethylallyl)adenosine (i(6)A). This chain is tRNA dimethylallyltransferase, found in Thioalkalivibrio sulfidiphilus (strain HL-EbGR7).